We begin with the raw amino-acid sequence, 31 residues long: Gamma-conotoxin-like As7a (31 aa).

Cystine bridges form between cysteine 2–cysteine 16, cysteine 9–cysteine 20, and cysteine 15–cysteine 31. 4-carboxyglutamate is present on glutamate 14.

It belongs to the conotoxin O1 superfamily. As to expression, expressed by the venom duct.

It is found in the secreted. In terms of biological role, gamma-conotoxins may act on voltage-gated non-specific cation pacemaker channels (HCN). Elicits toxic effects in the freshwater snail Pomacea paludosa after intramuscular injection, but it has no effect when injected intracerebrally into mice. The sequence is that of Gamma-conotoxin-like As7a from Conus cancellatus (Cancellate cone).